Reading from the N-terminus, the 257-residue chain is Phycoerythrobilin:ferredoxin oxidoreductase (257 aa).

This sequence belongs to the HY2 family.

It carries out the reaction (3Z)-phycoerythrobilin + oxidized 2[4Fe-4S]-[ferredoxin] = 15,16-dihydrobiliverdin + reduced 2[4Fe-4S]-[ferredoxin] + 2 H(+). Catalyzes the two-electron reduction of the C2 and C3(1) diene system of 15,16-dihydrobiliverdin. In Prochlorococcus marinus (strain MIT 9211), this protein is Phycoerythrobilin:ferredoxin oxidoreductase.